We begin with the raw amino-acid sequence, 726 residues long: Type VI secretion system spike protein VgrG1c (726 aa).

The interval 502–522 (ANATQSGTKSRSSKGGTPANF) is disordered. The segment covering 507–518 (SGTKSRSSKGGT) has biased composition (low complexity).

It belongs to the VgrG protein family. In terms of assembly, forms homomultimers. Part of the type VI secretion system (T6SS).

The protein localises to the secreted. Part of the H1 type VI secretion system (H1-T6SS) specialized secretion system, which delivers several virulence factors in both prokaryotic and eukaryotic cells during infection. Allows the delivery of the Tse5/RhsP1 toxin to target cells where it exerts its toxicity. This chain is Type VI secretion system spike protein VgrG1c, found in Pseudomonas aeruginosa (strain ATCC 15692 / DSM 22644 / CIP 104116 / JCM 14847 / LMG 12228 / 1C / PRS 101 / PAO1).